Reading from the N-terminus, the 129-residue chain is DNA-directed RNA polymerase subunit omega (129 aa).

The disordered stretch occupies residues 76 to 100 (EVDEPEPEAVPMIASGDSSGGEDSD).

Belongs to the RNA polymerase subunit omega family. The RNAP catalytic core consists of 2 alpha, 1 beta, 1 beta' and 1 omega subunit. When a sigma factor is associated with the core the holoenzyme is formed, which can initiate transcription.

The catalysed reaction is RNA(n) + a ribonucleoside 5'-triphosphate = RNA(n+1) + diphosphate. Promotes RNA polymerase assembly. Latches the N- and C-terminal regions of the beta' subunit thereby facilitating its interaction with the beta and alpha subunits. This chain is DNA-directed RNA polymerase subunit omega, found in Xanthobacter autotrophicus (strain ATCC BAA-1158 / Py2).